The following is a 327-amino-acid chain: G protein pathway suppressor 2 (327 aa).

A coiled-coil region spans residues 14 to 109; sequence MARALHRHIM…RRRKEQSDLT (96 aa). The interval 26–65 is disordered; it reads RERKRQEEEEVDKMMEQKMKEEQERRKKKEMEERMSLEET. Glycyl lysine isopeptide (Lys-Gly) (interchain with G-Cter in SUMO1) cross-links involve residues Lys45 and Lys71. Residues 61 to 94 are interaction with SUMO; the sequence is SLEETKEQILKLEEKLLALQEEKHQLFLQLKKVL. Disordered stretches follow at residues 177–208 and 253–327; these read HGQF…SPSQ and QKQM…FYHK. Over residues 253–271 the composition is skewed to polar residues; that stretch reads QKQMEHANQQTGFSDSSSL. Arg312 is subject to Asymmetric dimethylarginine. A compositionally biased stretch (polar residues) spans 317-327; that stretch reads QHSQNPRFYHK. Position 323 is an asymmetric dimethylarginine; alternate (Arg323). Omega-N-methylarginine; alternate is present on Arg323.

Component of the N-Cor repressor complex, at least composed of NCOR1, NCOR2, HDAC3, TBL1X, TBL1R, CORO2A and GPS2. Interacts (when sumoylated at Lys-71) with TBL1X; leading to protect GPS2 from degradation by the proteasome. Interacts with UBE2N; leading to inhibit UBE2N/Ubc13 activity. Interacts with TRAF1. Interacts with TRAF2. Interacts with TRAF6. Interacts with PPARG (when in the liganded conformation). Interacts with (sumoylated) NR1H2; interaction with sumoylated NR1H2 and NR5A2 onto hepatic acute phase protein promoters prevents N-Cor corepressor complex dissociation. Interacts with (sumoylated) NR5A2; interaction with sumoylated NR1H2 and NR5A2 onto hepatic acute phase protein promoters prevents N-Cor corepressor complex dissociation. Interacts with NR1H3. Interacts with RFX4. Interacts with ANKRD26. As to quaternary structure, (Microbial infection) Interacts (via coiled coil domain) with hepatitis C virus (HCV) NS5A. Post-translationally, sumoylation regulates its subcellular location. Sumoylation at Lys-45 and Lys-71 regulates the shuttling between the cytoplasm and the nucleus. Sumoylation at Lys-71 is required for interaction with TBL1X. Sumoylated at Lys-45 and Lys-71 in mitochondrion. Desumoylation by SENP1 leads to relocation from the mitochondria to the nucleus. Ubiquitinated at the C-terminus by SIAH2; leading to its degradation by the proteasome. Interaction with TBL1X and methylation at Arg-323 protect GPS2 against ubiquitination and degradation. In terms of processing, methylated at Arg-312 and Arg-323 by PRMT6. Methylation at Arg-323 protects from degradation by the proteasome. Widely expressed.

It localises to the nucleus. The protein resides in the mitochondrion. The protein localises to the cytoplasm. It is found in the cytosol. In terms of biological role, key regulator of inflammation, lipid metabolism and mitochondrion homeostasis that acts by inhibiting the activity of the ubiquitin-conjugating enzyme UBE2N/Ubc13, thereby inhibiting 'Lys-63'-linked ubiquitination. In the nucleus, can both acts as a corepressor and coactivator of transcription, depending on the context. Acts as a transcription coactivator in adipocytes by promoting the recruitment of PPARG to promoters: acts by inhibiting the activity of the ubiquitin-conjugating enzyme UBE2N/Ubc13, leading to stabilization of KDM4A and subsequent histone H3 'Lys-9' (H3K9) demethylation. Promotes cholesterol efflux by acting as a transcription coactivator. Acts as a regulator of B-cell development by inhibiting UBE2N/Ubc13, thereby restricting the activation of Toll-like receptors (TLRs) and B-cell antigen receptors (BCRs) signaling pathways. Acts as a key mediator of mitochondrial stress response: in response to mitochondrial depolarization, relocates from the mitochondria to the nucleus following desumoylation and specifically promotes expression of nuclear-encoded mitochondrial genes. Promotes transcription of nuclear-encoded mitochondrial genes by inhibiting UBE2N/Ubc13. Can also act as a corepressor as part of the N-Cor repressor complex by repressing active PPARG. Plays an anti-inflammatory role in macrophages and is required for insulin sensitivity by acting as a corepressor. Plays an anti-inflammatory role during the hepatic acute phase response by interacting with sumoylated NR1H2 and NR5A2 proteins, thereby preventing N-Cor corepressor complex dissociation. In the cytosol, also plays a non-transcriptional role by regulating insulin signaling and pro-inflammatory pathways. In the cytoplasm, acts as a negative regulator of inflammation by inhibiting the pro-inflammatory TNF-alpha pathway; acts by repressing UBE2N/Ubc13 activity. In the cytoplasm of adipocytes, restricts the activation of insulin signaling via inhibition of UBE2N/Ubc13-mediated ubiquitination of AKT. Able to suppress G-protein- and mitogen-activated protein kinase-mediated signal transduction. Acts as a tumor-suppressor in liposarcoma. Functionally, (Microbial infection) Required for efficient replication of hepatitis C virus (HCV) by promoting the interaction between VAPA and HCV virus protein NS5A. The polypeptide is G protein pathway suppressor 2 (Homo sapiens (Human)).